The chain runs to 505 residues: Ikaros family zinc finger protein (505 aa).

4 consecutive C2H2-type zinc fingers follow at residues 18 to 40 (LTCE…KRSH), 46 to 68 (FQCN…VKLH), 74 to 96 (FKCS…IRTH), and 102 to 128 (YKCN…PGFH). Composition is skewed to polar residues over residues 262–273 (FLNTPSPVTRSA) and 309–327 (RFQH…SQQP). Disordered regions lie at residues 262 to 296 (FLNT…DIGS) and 309 to 440 (RFQH…VSGS). A compositionally biased stretch (gly residues) spans 336 to 345 (ILGGSLGGIC). The segment covering 366 to 377 (ATSSPSNSCPDS) has biased composition (polar residues). The segment covering 393–406 (GSGSSTSRPNGSTG) has biased composition (low complexity). Positions 409–419 (HRPEMHQDNGR) are enriched in basic and acidic residues. Polar residues predominate over residues 424-439 (SGASDSSSLPTYNVSG). 2 consecutive C2H2-type zinc fingers follow at residues 448-470 (YPCH…MGCH) and 476-500 (FECN…RGEH).

It belongs to the Ikaros C2H2-type zinc-finger protein family. Heterodimer and homodimer with other IKAROS family members. As to expression, expression is strongest in the blood, gills and intestine.

Its subcellular location is the nucleus. This chain is Ikaros family zinc finger protein, found in Myxine glutinosa (Atlantic hagfish).